The primary structure comprises 179 residues: ATP-dependent protease subunit HslV (179 aa).

Residue threonine 5 is part of the active site. Positions 164, 167, and 170 each coordinate Na(+).

Belongs to the peptidase T1B family. HslV subfamily. In terms of assembly, a double ring-shaped homohexamer of HslV is capped on each side by a ring-shaped HslU homohexamer. The assembly of the HslU/HslV complex is dependent on binding of ATP.

The protein resides in the cytoplasm. It catalyses the reaction ATP-dependent cleavage of peptide bonds with broad specificity.. Its activity is regulated as follows. Allosterically activated by HslU binding. Functionally, protease subunit of a proteasome-like degradation complex believed to be a general protein degrading machinery. This Verminephrobacter eiseniae (strain EF01-2) protein is ATP-dependent protease subunit HslV.